Reading from the N-terminus, the 85-residue chain is U4-theraphotoxin-Hhn1g (85 aa).

The first 22 residues, 1-22 (MKVTLIAILTCAAVLVLHTTAA), serve as a signal peptide directing secretion. The propeptide occupies 23-48 (EELEAESQLMEVGMPDTELAAVDEER). Disulfide bonds link Cys-52–Cys-66, Cys-56–Cys-77, and Cys-71–Cys-82.

This sequence belongs to the neurotoxin 12 (Hwtx-2) family. 02 (Hwtx-2) subfamily. Expressed by the venom gland.

Its subcellular location is the secreted. Postsynaptic neurotoxin. In Cyriopagopus hainanus (Chinese bird spider), this protein is U4-theraphotoxin-Hhn1g.